A 379-amino-acid polypeptide reads, in one-letter code: Heme A synthase (379 aa).

The tract at residues 1–28 (MAGSRSIFEEVQDSQKPAAMPGGVSRDR) is disordered. A run of 8 helical transmembrane segments spans residues 35-55 (VRVF…IGGL), 124-144 (FLGV…SVPV), 150-170 (LLLL…MVHS), 183-203 (RLAV…WYIL), 227-247 (ATGL…VAGI), 287-307 (FFHR…WIMA), 318-338 (AFDW…MTVM), and 341-361 (SPWY…TLIL). His-289 contributes to the heme binding site. His-349 serves as a coordination point for heme.

Belongs to the COX15/CtaA family. Type 2 subfamily. Interacts with CtaB. Heme b is required as a cofactor.

Its subcellular location is the cell membrane. It catalyses the reaction Fe(II)-heme o + 2 A + H2O = Fe(II)-heme a + 2 AH2. It functions in the pathway porphyrin-containing compound metabolism; heme A biosynthesis; heme A from heme O: step 1/1. Catalyzes the conversion of heme O to heme A by two successive hydroxylations of the methyl group at C8. The first hydroxylation forms heme I, the second hydroxylation results in an unstable dihydroxymethyl group, which spontaneously dehydrates, resulting in the formyl group of heme A. This chain is Heme A synthase, found in Jannaschia sp. (strain CCS1).